Here is a 494-residue protein sequence, read N- to C-terminus: Transcription factor SOX-9 (494 aa).

Disordered regions lie at residues Met-1–Glu-66 and Glu-159–Val-275. Residues Ser-27–Asp-42 show a composition bias toward low complexity. 2 stretches are compositionally biased toward basic and acidic residues: residues Gly-56–Glu-66 and Glu-159–Tyr-174. Residues Glu-63–Pro-103 form a dimerization (DIM) region. The interval Glu-63–Pro-103 is PQA. At Ser-64 the chain carries Phosphoserine. Residues Val-105–Lys-173 constitute a DNA-binding region (HMG box). The residue at position 181 (Ser-181) is a Phosphoserine. Residues Ser-211–His-222 show a composition bias toward low complexity. The tract at residues Pro-224–Pro-309 is transactivation domain (TAM). Short sequence motifs (9aaTAD) lie at residues Ile-277–Ser-286 and Asp-292–Leu-300. A compositionally biased stretch (low complexity) spans Ser-326 to Ala-337. A disordered region spans residues Ser-326–Gln-402. A compositionally biased stretch (pro residues) spans Pro-344–Pro-353. The transactivation domain (TAC) stretch occupies residues Arg-372–Pro-494. Residue Lys-376 forms a Glycyl lysine isopeptide (Lys-Gly) (interchain with G-Cter in SUMO) linkage. Residues Glu-378–Glu-387 are compositionally biased toward polar residues. The segment covering Gln-388–Gln-402 has biased composition (low complexity). A 9aaTAD 3 motif is present at residues Gly-445–Tyr-453. Positions Tyr-462–Pro-494 are disordered. The span at Gly-470–Pro-494 shows a compositional bias: polar residues.

As to quaternary structure, interacts with SNAI2; triggers neural crest delamination in a phosphorylation dependent manner. Interacts with UBE2I. Phosphorylated at Ser-181 in the developing neural tube. Phosphorylation at either Ser-64 or Ser-181 is required for sumoylation, but phosphorylation is not dependent on sumoylation. Sumoylation is enhanced by PKA. Phosphorylation is required for interaction with SNAI2 to trigger neural crest delamination and for an efficient trunk neural crest delamination, whereas sumoylation plays a less significant role. Phosphorylation and sumoylation are induced by BMP signaling pathway. In terms of processing, sumoylated at Lys-376; phosphorylation at either Ser-64 or Ser-181 is required for sumoylation. Sumoylation is induced by BMP signaling pathway.

The protein resides in the nucleus. Functionally, transcription factor that plays a key role in chondrocytes differentiation and skeletal development. Specifically binds the 5'-ACAAAG-3' DNA motif present in enhancers and super-enhancers and promotes expression of genes important for chondrogenesis, including COL2A1. Plays a central role in successive steps of chondrocyte differentiation. Absolutely required for precartilaginous condensation, the first step in chondrogenesis during which skeletal progenitors differentiate into prechondrocytes. Together with SOX5 and SOX6, required for overt chondrogenesis when condensed prechondrocytes differentiate into early stage chondrocytes, the second step in chondrogenesis. Later, required to direct hypertrophic maturation and block osteoblast differentiation of growth plate chondrocytes: maintains chondrocyte columnar proliferation, delays prehypertrophy and then prevents osteoblastic differentiation of chondrocytes. Also required for chondrocyte hypertrophy, both indirectly, by keeping the lineage fate of chondrocytes, and directly, by remaining present in upper hypertrophic cells. Low lipid levels are the main nutritional determinant for chondrogenic commitment of skeletal progenitor cells: when lipids levels are low, FOXO transcription factors promote expression of SOX9, which induces chondrogenic commitment and suppresses fatty acid oxidation. In addition to cartilage development, also acts as a regulator of proliferation and differentiation in epithelial stem/progenitor cells. In response to bone morphogenetic protein stimulus, phosphorylation is induced and then sumoylation, allowing cooperation with SNAI2 to trigger neural crest delamination. The protein is Transcription factor SOX-9 of Gallus gallus (Chicken).